A 347-amino-acid polypeptide reads, in one-letter code: Phosphate acyltransferase (347 aa).

The protein belongs to the PlsX family. In terms of assembly, homodimer. Probably interacts with PlsY.

The protein resides in the cytoplasm. The enzyme catalyses a fatty acyl-[ACP] + phosphate = an acyl phosphate + holo-[ACP]. Its pathway is lipid metabolism; phospholipid metabolism. In terms of biological role, catalyzes the reversible formation of acyl-phosphate (acyl-PO(4)) from acyl-[acyl-carrier-protein] (acyl-ACP). This enzyme utilizes acyl-ACP as fatty acyl donor, but not acyl-CoA. The chain is Phosphate acyltransferase from Dehalococcoides mccartyi (strain ATCC BAA-2100 / JCM 16839 / KCTC 5957 / BAV1).